Reading from the N-terminus, the 78-residue chain is Putative membrane protein insertion efficiency factor (78 aa).

This sequence belongs to the UPF0161 family.

It is found in the cell inner membrane. Its function is as follows. Could be involved in insertion of integral membrane proteins into the membrane. The sequence is that of Putative membrane protein insertion efficiency factor from Prochlorococcus marinus (strain MIT 9301).